Reading from the N-terminus, the 548-residue chain is Nodulation protein NolO (548 aa).

Belongs to the NodU/CmcH family.

Involved in 6-O-carbamoylation of Nod-factors. The chain is Nodulation protein NolO (nolO) from Bradyrhizobium diazoefficiens (strain JCM 10833 / BCRC 13528 / IAM 13628 / NBRC 14792 / USDA 110).